A 666-amino-acid polypeptide reads, in one-letter code: Neurexin-2-beta (666 aa).

The segment covering M1 to G10 has biased composition (gly residues). The interval M1–P30 is disordered. A signal peptide spans M1–G50. A compositionally biased stretch (pro residues) spans P21–P30. Topologically, residues A51–T590 are extracellular. Positions T91–S299 constitute a Laminin G-like domain. Ca(2+) is bound by residues D143 and V160. N190 is a glycosylation site (N-linked (GlcNAc...) asparagine). Ca(2+) contacts are provided by I242 and N244. Residues A327–N346 are disordered. Residue S354 is glycosylated (O-linked (Xyl...) (heparan sulfate) serine). Disordered stretches follow at residues A412–P443 and T479–V580. A helical transmembrane segment spans residues G591 to M611. At Y612–V666 the chain is on the cytoplasmic side. Residues N633–V666 are disordered.

Belongs to the neurexin family. Interacts (via cytoplasmic C-terminal region) with CASK. Specific isoforms bind alpha-dystroglycan and neuroligins NLGN1, NLGN2 and NLGN3. Interacts with CBLN1, CBLN2 and, less avidly, with CBLN4. Interacts with CLSTN3. Post-translationally, O-glycosylated; contains heparan sulfate. Heparan sulfate attachment is required for synapse development by mediating interactions with neuroligins.

The protein resides in the presynaptic cell membrane. Functionally, neuronal cell surface protein that may be involved in cell recognition and cell adhesion. The chain is Neurexin-2-beta (NRXN2) from Homo sapiens (Human).